Reading from the N-terminus, the 224-residue chain is Peroxiredoxin-6 (224 aa).

The 165-residue stretch at 5-169 (LLLGDEAPNF…ILRVIISLQL (165 aa)) folds into the Thioredoxin domain. A required and sufficient for targeting to lysosomes and lamellar bodies region spans residues 31–40 (DSWGILFSHP). T44 is subject to Phosphothreonine. The active-site Cysteine sulfenic acid (-SOH) intermediate; for peroxidase activity is the C47. K63 carries the post-translational modification N6-acetyllysine. Y89 carries the phosphotyrosine modification. D140 acts as the For phospholipase activity in catalysis. Position 177 is a phosphothreonine; by MAPK (T177). The residue at position 209 (K209) is an N6-acetyllysine; alternate. At K209 the chain carries N6-succinyllysine; alternate.

This sequence belongs to the peroxiredoxin family. Prx6 subfamily. As to quaternary structure, homodimer. Interacts with GSTP1; mediates PRDX6 glutathionylation and regeneration. Interacts with APEX1. Interacts with STH. May interact with FAM168B. May interact with HTR2A. The cofactor is Does not need Ca(2+) as cofactor.. Irreversibly inactivated by overoxidation of Cys-47 to sulfinic acid (Cys-SO(2)H) and sulfonic acid (Cys-SO(3)H) forms upon oxidative stress. Post-translationally, phosphorylation at Thr-177 by MAP kinases increases the phospholipase activity of the enzyme. The phosphorylated form exhibits a greater lysophosphatidylcholine acyltransferase activity compared to the non-phosphorylated form.

Its subcellular location is the cytoplasm. The protein resides in the lysosome. The catalysed reaction is a hydroperoxide + 2 glutathione = an alcohol + glutathione disulfide + H2O. It catalyses the reaction a 1,2-diacyl-sn-glycero-3-phosphocholine + H2O = a 1-acyl-sn-glycero-3-phosphocholine + a fatty acid + H(+). It carries out the reaction a 1-acyl-sn-glycero-3-phosphocholine + an acyl-CoA = a 1,2-diacyl-sn-glycero-3-phosphocholine + CoA. The enzyme catalyses 1-hexadecanoyl-sn-glycero-3-phosphocholine + hexadecanoyl-CoA = 1,2-dihexadecanoyl-sn-glycero-3-phosphocholine + CoA. The catalysed reaction is 1,2-dihexadecanoyl-sn-glycero-3-phosphocholine + H2O = 1-hexadecanoyl-sn-glycero-3-phosphocholine + hexadecanoate + H(+). In terms of biological role, thiol-specific peroxidase that catalyzes the reduction of hydrogen peroxide and organic hydroperoxides to water and alcohols, respectively. Can reduce H(2)O(2) and short chain organic, fatty acid, and phospholipid hydroperoxides. Also has phospholipase activity, and can therefore either reduce the oxidized sn-2 fatty acyl group of phospholipids (peroxidase activity) or hydrolyze the sn-2 ester bond of phospholipids (phospholipase activity). These activities are dependent on binding to phospholipids at acidic pH and to oxidized phospholipds at cytosolic pH. Plays a role in cell protection against oxidative stress by detoxifying peroxides and in phospholipid homeostasis. Exhibits acyl-CoA-dependent lysophospholipid acyltransferase which mediates the conversion of lysophosphatidylcholine (1-acyl-sn-glycero-3-phosphocholine or LPC) into phosphatidylcholine (1,2-diacyl-sn-glycero-3-phosphocholine or PC). Shows a clear preference for LPC as the lysophospholipid and for palmitoyl CoA as the fatty acyl substrate. The chain is Peroxiredoxin-6 (PRDX6) from Bos taurus (Bovine).